Here is a 439-residue protein sequence, read N- to C-terminus: Sodium-dependent phosphate transport protein 3 (439 aa).

N-linked (GlcNAc...) asparagine glycosylation is found at Asn47, Asn56, Asn68, and Asn69. Helical transmembrane passes span 98 to 118, 130 to 150, 183 to 203, 211 to 231, 273 to 293, 317 to 337, 350 to 369, 374 to 396, and 415 to 435; these read INYG…IFGA, SLLT…VIMV, TIAG…GGLI, FIFY…FTVI, LPLW…TIIL, LPFI…DFLL, LFSS…LPFV, VITI…GFII, and GFGL…ISQV.

This sequence belongs to the major facilitator superfamily. Sodium/anion cotransporter family. As to expression, expressed in the small intestine, kidney, spleen and testis. Not detected in fetal brain, bone marrow, and mammary gland.

The protein localises to the apical cell membrane. The enzyme catalyses 3 Na(+)(out) + phosphate(out) = 3 Na(+)(in) + phosphate(in). It carries out the reaction urate(out) + n chloride(in) = urate(in) + n chloride(out). In terms of biological role, acts as a membrane potential-dependent organic anion transporter, the transport requires a low concentration of chloride ions. Mediates chloride-dependent transport of urate. Can actively transport inorganic phosphate into cells via Na(+) cotransport. This is Sodium-dependent phosphate transport protein 3 (SLC17A2) from Homo sapiens (Human).